A 70-amino-acid polypeptide reads, in one-letter code: DNA-directed RNA polymerase subunit omega (70 aa).

The protein belongs to the RNA polymerase subunit omega family. As to quaternary structure, the RNAP catalytic core consists of 2 alpha, 1 beta, 1 beta' and 1 omega subunit. When a sigma factor is associated with the core the holoenzyme is formed, which can initiate transcription.

It carries out the reaction RNA(n) + a ribonucleoside 5'-triphosphate = RNA(n+1) + diphosphate. Promotes RNA polymerase assembly. Latches the N- and C-terminal regions of the beta' subunit thereby facilitating its interaction with the beta and alpha subunits. The polypeptide is DNA-directed RNA polymerase subunit omega (Pelobacter propionicus (strain DSM 2379 / NBRC 103807 / OttBd1)).